The chain runs to 172 residues: Peptidyl-prolyl cis-trans isomerase (172 aa).

Positions 10-168 (YFDVYANEES…YRIEIRDCGV (159 aa)) constitute a PPIase cyclophilin-type domain.

Belongs to the cyclophilin-type PPIase family.

The protein resides in the cytoplasm. It carries out the reaction [protein]-peptidylproline (omega=180) = [protein]-peptidylproline (omega=0). Its function is as follows. PPIases accelerate the folding of proteins. They catalyze the cis-trans isomerization of proline imidic peptide bonds in oligopeptides. The protein is Peptidyl-prolyl cis-trans isomerase (CPR1) of Encephalitozoon cuniculi (strain GB-M1) (Microsporidian parasite).